The chain runs to 205 residues: Small ribosomal subunit protein uS4 (205 aa).

One can recognise an S4 RNA-binding domain in the interval 94-154; that stretch reads SRLDNSVYRA…TRKDGKIRKN (61 aa).

Belongs to the universal ribosomal protein uS4 family. Part of the 30S ribosomal subunit. Contacts protein S5. The interaction surface between S4 and S5 is involved in control of translational fidelity.

Functionally, one of the primary rRNA binding proteins, it binds directly to 16S rRNA where it nucleates assembly of the body of the 30S subunit. In terms of biological role, with S5 and S12 plays an important role in translational accuracy. The chain is Small ribosomal subunit protein uS4 from Mesomycoplasma hyopneumoniae (strain 232) (Mycoplasma hyopneumoniae).